The following is a 629-amino-acid chain: ATP-dependent DNA helicase II subunit 2 (629 aa).

The Ku domain maps to 254 to 476 (SGLNRKTAVE…GHQIDELMEQ (223 aa)). Residues 608-620 (DLETLLKRGEQHS) are compositionally biased toward basic and acidic residues. The segment at 608–629 (DLETLLKRGEQHSRGSPNNSNN) is disordered.

The protein belongs to the ku80 family. As to quaternary structure, heterodimer of YKU70/HDF1 and YKU80/HDF2. Interacts with SIR4.

The protein localises to the nucleus. The protein resides in the chromosome. Its subcellular location is the telomere. It catalyses the reaction ATP + H2O = ADP + phosphate + H(+). Single-stranded DNA-dependent ATP-dependent helicase. Involved in non-homologous end joining (NHEJ) DNA double strand break repair. DNA-binding is sequence-independent but has a high affinity to nicks in double-stranded DNA and to the ends of duplex DNA. Binds to naturally occurring chromosomal ends, and therefore provides chromosomal end protection. Appears to have a role in recruitment of telomerase and CDC13 to the telomere and the subsequent telomere elongation. Required also for telomere recombination to repair telomeric ends in the absence of telomerase. KU70, of the KU70/KU80 heterodimer, binds to the stem loop of TLC1, the RNA component of telomerase. Involved in telomere maintenance. Interacts with telomeric repeats and subtelomeric sequences thereby controlling telomere length and protecting against subtelomeric rearrangement. Maintains telomeric chromatin, which is involved in silencing the expression of genes located at the telomere. Required for mating-type switching. In Saccharomyces cerevisiae (strain ATCC 204508 / S288c) (Baker's yeast), this protein is ATP-dependent DNA helicase II subunit 2 (YKU80).